Here is a 587-residue protein sequence, read N- to C-terminus: Complement component C8 beta chain (587 aa).

A signal peptide spans 1–31 (MNHKLKPTVGLGYCLLCAALCLLLLRDVAIA). A propeptide spanning residues 32–44 (GSGEEPSGVREAR) is cleaved from the precursor. Residues 56-111 (DCVQSEWSSWTRCDVCRKKRYRYAKLVQPSQFGGEPCHVQGKEVEPCSPPSRYDCT) form the TSP type-1 1 domain. Intrachain disulfides connect C57–C92, C68–C102, C71–C110, C118–C129, and C123–C142. C-linked (Man) tryptophan glycosylation is found at W62 and W65. One can recognise an LDL-receptor class A domain in the interval 117-159 (LCEGFLCTYTGRCVPIDLRCNGDDDCGDWSAEKGSPKVPKACK). Residues L134, N137, D139, D141, and E148 each contribute to the Ca(2+) site. An MACPF domain is found at 154–500 (VPKACKQEAQ…EYLEESSSCR (347 aa)). A disulfide bridge links C158 with C196. The next 4 beta stranded transmembrane spans lie at 248 to 255 (TTVSIGFA), 258 to 265 (GVAEFGFN), 375 to 382 (EQIVLKVG), and 388 to 395 (VYVTVGLE). 5 disulfide bridges follow: C374–C399, C499–C546, C501–C517, C504–C519, and C521–C530. One can recognise an EGF-like domain in the interval 501-531 (CAPCRNNGLAVLKGTRCECVCPSGYSGLGCE). Residues 541-587 (DGSWSCWGSWSPCRGRSKTRSRQCNNPAPSSGGIACRGLQMETTDCF) enclose the TSP type-1 2 domain. C-linked (Man) tryptophan glycans are attached at residues W547 and W550. Cysteines 553 and 586 form a disulfide.

This sequence belongs to the complement C6/C7/C8/C9 family. Heterotrimer of 3 chains: alpha (C8A), beta (C8B) and gamma (C8G); the alpha and gamma chains are disulfide bonded. Component of the membrane attack complex (MAC), composed of complement C5b, C6, C7, C8A, C8B, C8G and multiple copies of the pore-forming subunit C9.

The protein localises to the secreted. It localises to the target cell membrane. Functionally, component of the membrane attack complex (MAC), a multiprotein complex activated by the complement cascade, which inserts into a target cell membrane and forms a pore, leading to target cell membrane rupture and cell lysis. The MAC is initiated by proteolytic cleavage of C5 into complement C5b in response to the classical, alternative, lectin and GZMK complement pathways. The complement pathways consist in a cascade of proteins that leads to phagocytosis and breakdown of pathogens and signaling that strengthens the adaptive immune system. C8B, together with C8A and C8G, inserts into the target membrane, but does not form pores by itself. During MAC assembly, associates with C5b, C6 and C7 to form the C5b8 intermediate complex that inserts into the target membrane and traverses the bilayer increasing membrane rigidity. The sequence is that of Complement component C8 beta chain (c8b) from Oncorhynchus mykiss (Rainbow trout).